Here is a 464-residue protein sequence, read N- to C-terminus: Macrophage metalloelastase (464 aa).

An N-terminal signal peptide occupies residues 1–17 (MKFLLLILTLWVTSSGA). The propeptide at 18 to 100 (DPLKENDMLF…DVYHFKTMPG (83 aa)) is activation peptide. The N-linked (GlcNAc...) asparagine glycan is linked to Asn-69. Residues 85–92 (PRCGVPDV) carry the Cysteine switch motif. Cys-87 is a binding site for Zn(2+). Positions 119 and 153 each coordinate Ca(2+). The Zn(2+) site is built by His-163 and Asp-165. Residues Asp-170, Gly-171, Gly-173, and Val-175 each contribute to the Ca(2+) site. His-178 provides a ligand contact to Zn(2+). Ca(2+) is bound by residues Gly-185, Gly-187, and Asp-189. A Zn(2+)-binding site is contributed by His-191. Positions 193, 194, and 196 each coordinate Ca(2+). His-213 provides a ligand contact to Zn(2+). Glu-214 is an active-site residue. Positions 217 and 223 each coordinate Zn(2+). Hemopexin repeat units follow at residues 274-323 (PTAC…WPTL), 324-370 (PSGI…GFPD), 372-420 (VKKI…FPGI), and 421-464 (GPKI…WFDC). Cysteines 277 and 464 form a disulfide. Positions 284, 328, 376, and 425 each coordinate Ca(2+).

Belongs to the peptidase M10A family. Ca(2+) serves as cofactor. Zn(2+) is required as a cofactor.

The protein resides in the secreted. It is found in the extracellular space. Its subcellular location is the extracellular matrix. It catalyses the reaction Hydrolysis of soluble and insoluble elastin. Specific cleavages are also produced at 14-Ala-|-Leu-15 and 16-Tyr-|-Leu-17 in the B chain of insulin.. In terms of biological role, may be involved in tissue injury and remodeling. Has significant elastolytic activity. Can accept large and small amino acids at the P1' site, but has a preference for leucine. Aromatic or hydrophobic residues are preferred at the P1 site, with small hydrophobic residues (preferably alanine) occupying P3. This is Macrophage metalloelastase (MMP12) from Oryctolagus cuniculus (Rabbit).